The following is a 361-amino-acid chain: Tegument protein UL51 homolog (361 aa).

Cysteine 8 is lipidated: S-palmitoyl cysteine; by host. A disordered region spans residues 251–299; that stretch reads GDEEDEVTVMSPSPEPVQQQPPVEPVQQQPQGRGSHRRRYKESAPQETL. A compositionally biased stretch (low complexity) spans 266 to 281; sequence PVQQQPPVEPVQQQPQ.

The protein belongs to the herpesviridae UL51 family. In terms of assembly, oligomerizes. Interacts with UL103; this interaction mediates UL103 incorporation to virions. Post-translationally, phosphorylated. In terms of processing, palmitoylation is necessary for Golgi localization.

The protein localises to the virion tegument. The protein resides in the host cytoplasm. It is found in the host Golgi apparatus. Its function is as follows. Plays several roles during the time course of infection, including egress of virus particles from the perinuclear space and secondary envelopment of cytoplasmic capsids that bud into specific trans-Golgi network (TGN)-derived membranes. This chain is Tegument protein UL51 homolog (UL71), found in Homo sapiens (Human).